A 393-amino-acid polypeptide reads, in one-letter code: Chalcone synthase 3 (393 aa).

Residue Cys166 is part of the active site.

It belongs to the thiolase-like superfamily. Chalcone/stilbene synthases family.

The catalysed reaction is (E)-4-coumaroyl-CoA + 3 malonyl-CoA + 3 H(+) = 2',4,4',6'-tetrahydroxychalcone + 3 CO2 + 4 CoA. The protein operates within secondary metabolite biosynthesis; flavonoid biosynthesis. In terms of biological role, the primary product of this enzyme is 4,2',4',6'-tetrahydroxychalcone (also termed naringenin-chalcone or chalcone) which can under specific conditions spontaneously isomerize into naringenin. This Ruta graveolens (Common rue) protein is Chalcone synthase 3 (CHS3).